The primary structure comprises 200 residues: Molybdenum cofactor guanylyltransferase (200 aa).

GTP-binding positions include 15–17, Lys-28, Asp-74, and Asp-104; that span reads LAG. Asp-104 is a binding site for Mg(2+).

The protein belongs to the MobA family. As to quaternary structure, monomer. Requires Mg(2+) as cofactor.

The protein resides in the cytoplasm. It carries out the reaction Mo-molybdopterin + GTP + H(+) = Mo-molybdopterin guanine dinucleotide + diphosphate. Transfers a GMP moiety from GTP to Mo-molybdopterin (Mo-MPT) cofactor (Moco or molybdenum cofactor) to form Mo-molybdopterin guanine dinucleotide (Mo-MGD) cofactor. In Pseudomonas fluorescens (strain Pf0-1), this protein is Molybdenum cofactor guanylyltransferase.